Reading from the N-terminus, the 144-residue chain is D-aminoacyl-tRNA deacylase (144 aa).

The short motif at 136-137 (GP) is the Gly-cisPro motif, important for rejection of L-amino acids element.

It belongs to the DTD family. Homodimer.

It is found in the cytoplasm. It catalyses the reaction glycyl-tRNA(Ala) + H2O = tRNA(Ala) + glycine + H(+). The catalysed reaction is a D-aminoacyl-tRNA + H2O = a tRNA + a D-alpha-amino acid + H(+). Its function is as follows. An aminoacyl-tRNA editing enzyme that deacylates mischarged D-aminoacyl-tRNAs. Also deacylates mischarged glycyl-tRNA(Ala), protecting cells against glycine mischarging by AlaRS. Acts via tRNA-based rather than protein-based catalysis; rejects L-amino acids rather than detecting D-amino acids in the active site. By recycling D-aminoacyl-tRNA to D-amino acids and free tRNA molecules, this enzyme counteracts the toxicity associated with the formation of D-aminoacyl-tRNA entities in vivo and helps enforce protein L-homochirality. This is D-aminoacyl-tRNA deacylase from Vibrio parahaemolyticus serotype O3:K6 (strain RIMD 2210633).